The primary structure comprises 388 residues: 2-methylene-furan-3-one reductase (388 aa).

A chloroplast-targeting transit peptide spans 1-60; that stretch reads MEALLSSTTLQLKPLHPPSSFSSLHSPFSSISVLRVKGSKKAETFIQRSNFSTVLPLRVS. NADP(+) is bound by residues Lys-125, 240-241, 263-266, Tyr-281, 330-332, and 377-378; these read GV, STGK, FVV, and RA. Lys-125 is a binding site for substrate.

The protein belongs to the zinc-containing alcohol dehydrogenase family. Quinone oxidoreductase subfamily. Monomer.

The protein localises to the plastid. The protein resides in the chloroplast. It catalyses the reaction 4-hydroxy-2,5-dimethyl-furan-3(2H)-one + NADP(+) = 4-hydroxy-5-methyl-2-methylenefuran-3(2H)-one + NADPH + H(+). Enone oxidoreductase involved in the biosynthesis of 4-hydroxy-2,5-dimethyl-3(2H)-furanone (HDMF or furaneol). Can use both NADH and NADPH as the electron donor. The protein is 2-methylene-furan-3-one reductase (EO) of Solanum lycopersicum (Tomato).